Here is a 471-residue protein sequence, read N- to C-terminus: MFAFYFLTACISLKGVFGVSPSYNGLGLTPQMGWDNWNTFACDVSEQLLLDTADRISDLGLKDMGYKYIILDDCWSSGRDSDGFLVADEQKFPNGMGHVADHLHNNSFLFGMYSSAGEYTCAGYPGSLGREEEDAQFFANNRVDYLKYDNCYNKGQFGTPEISYHRYKAMSDALNKTGRPIFYSLCNWGQDLTFYWGSGIANSWRMSGDITAEFTRPDSRCPCDGDEYDCKYAGFHCSIMNILNKAAPMGQNAGVGGWNDLDNLEVRVGNLTDDEEKAHFPMWAMVKSPLIIGADVNTLKPSSYSIYSQASVIAINQDPKGIPATRVWRYYVSDTDEYGQGEIQMWSGPLDNGDQVVALLNGGSVPRPMNTTLEEIFFDSNLGSKELTSTWDIYDLWANRVDNSTASAILGQNKTATGILYNATEQSYKDGLSKNDTRLFGQKIGSLSPNAILNTTVPAHGIAFYRLRPSA.

The signal sequence occupies residues 1 to 18; that stretch reads MFAFYFLTACISLKGVFG. A disulfide bridge links C42 with C74. D72 and D73 together coordinate substrate. Residue N105 is glycosylated (N-linked (GlcNAc...) asparagine). Residues C121 and C151 are joined by a disulfide bond. K147 contributes to the substrate binding site. Residue D149 is the Nucleophile of the active site. N-linked (GlcNAc...) asparagine glycosylation occurs at N175. R205 is a substrate binding site. D209 (proton donor) is an active-site residue. Disulfide bonds link C221-C237 and C223-C230. Residue Q251 coordinates substrate. N270, N370, N403, N413, N422, N435, and N454 each carry an N-linked (GlcNAc...) asparagine glycan.

Belongs to the glycosyl hydrolase 27 family. As to quaternary structure, homotetramer.

It is found in the secreted. It carries out the reaction Hydrolysis of terminal, non-reducing alpha-D-galactose residues in alpha-D-galactosides, including galactose oligosaccharides, galactomannans and galactolipids.. The sequence is that of Alpha-galactosidase 2 (MEL2) from Saccharomyces cerevisiae (Baker's yeast).